A 72-amino-acid polypeptide reads, in one-letter code: Translation initiation factor IF-1 (72 aa).

The region spanning 1 to 72 (MAKADVIEVE…TKGRITFRFK (72 aa)) is the S1-like domain.

This sequence belongs to the IF-1 family. As to quaternary structure, component of the 30S ribosomal translation pre-initiation complex which assembles on the 30S ribosome in the order IF-2 and IF-3, IF-1 and N-formylmethionyl-tRNA(fMet); mRNA recruitment can occur at any time during PIC assembly.

Its subcellular location is the cytoplasm. One of the essential components for the initiation of protein synthesis. Stabilizes the binding of IF-2 and IF-3 on the 30S subunit to which N-formylmethionyl-tRNA(fMet) subsequently binds. Helps modulate mRNA selection, yielding the 30S pre-initiation complex (PIC). Upon addition of the 50S ribosomal subunit IF-1, IF-2 and IF-3 are released leaving the mature 70S translation initiation complex. This chain is Translation initiation factor IF-1, found in Limosilactobacillus reuteri (strain DSM 20016) (Lactobacillus reuteri).